Consider the following 2391-residue polypeptide: Filaggrin-2 (2391 aa).

Residues 1 to 81 (MTDLLRSVVT…TEFLLMIFKL (81 aa)) are S-100-like. EF-hand domains are found at residues 8–43 (VVTVIDVFYKYTKQDGECGTLSKGELKELLEKELHP) and 49–84 (DDPDTVDVIMHMLDRDHDRRLDFTEFLLMIFKLTMA). Residues Asp62, Asp64, Asp66, Arg68, and Glu73 each contribute to the Ca(2+) site. 3 disordered regions span residues 96-275 (ASGS…DSGR), 349-369 (SYSQRGYGARENGQPQNCGGQ), and 406-2391 (NSSS…LSRH). The segment covering 98 to 107 (GSKKHRRGHR) has biased composition (basic residues). Over residues 111-121 (EESETEEDEED) the composition is skewed to acidic residues. Residues 149–163 (GTVKCRHGSNSRRLG) show a composition bias toward basic residues. The segment covering 166 to 176 (GNLSSSGNQEG) has biased composition (polar residues). Residues 193-209 (GKDRHGSSSVELRERIN) show a composition bias toward basic and acidic residues. One copy of the Filaggrin 1 repeat lies at 245–289 (ETSGHESNSTQSRIREQKLGSSCSGSGDSGRRSHACGYSNSSGCG). Polar residues-rich tracts occupy residues 420-442 (GSGSSQSTSFEQHGTGLSQSSGF) and 449-476 (SGQTCGQHESTSSQSLGYDQHGSSSGKT). Residues 421–466 (SGSSQSTSFEQHGTGLSQSSGFEQHVCGSGQTCGQHESTSSQSLGY) form a Filaggrin 2 repeat. Residues 480-507 (GQHGSGSGQSSGFGQCGSGSGQSSGFGQ) show a composition bias toward gly residues. The span at 508 to 562 (HGSVSGQSSGFGQHGSVSGQSSGFGQHESRSRQSSYGQHGSGSSQSSGYGQYGSR) shows a compositional bias: low complexity. Residues 568-604 (GQHGLGSGQSTGFGQYGSGSGQSSGFGQHGSGSGQSS) show a composition bias toward gly residues. Residues 605–655 (GFGQHESRSGQSSYGQHSSGSSQSSGYGQHGSRQTSGFGQHGSGSSQSTGF) show a composition bias toward low complexity. Gly residues predominate over residues 656-666 (GQYGSGSGQSS). A compositionally biased stretch (low complexity) spans 667-734 (GFGQHVSGSG…SSGQSSSFGQ (68 aa)). Positions 735–756 (HGSGSGQSSGFGQHGSGSGQSS) are enriched in gly residues. Residues 757 to 807 (GFGQHESRSGQSSYGQHSSGSSQSSGYGQHGSRQTSGFGQHGSGSSQSTGF) are compositionally biased toward low complexity. A compositionally biased stretch (gly residues) spans 808–831 (GQYGSGSGQSAGFGQHGSGSGQSS). Residues 832–884 (GFGQHESRSHQSSYGQHGSGSSQSSGYGQHGSSSGQTSGFGQHRSSSGQYSGF) are compositionally biased toward low complexity. Gly residues predominate over residues 885–908 (GQHGSGSGQSSGFGQHGTGSGQYS). Positions 918 to 956 (HQSSYGQHGSGSSQSSGYGQHGSSSGQTFGFGQHRSGSG) are enriched in low complexity. Residues 957-972 (QSSGFGQHGSGSGQSS) are compositionally biased toward gly residues. Composition is skewed to low complexity over residues 973 to 982 (GFGQHESGSG) and 994 to 1027 (SSQSNYGQHGSGSSQSSGYGQHGSSSGQTTGFGQ). The stretch at 1019 to 1051 (SGQTTGFGQHRSSSGQYSGFGQHGSGSDQSSGF) is one Filaggrin 3 repeat. Residues 1052–1062 (GQHGTGSGQSS) show a composition bias toward gly residues. Residues 1063 to 1098 (GFGQYESRSRQSSYGQHGSGSSQSSGYGQHGSNSGQ) are compositionally biased toward low complexity. The stretch at 1097–1141 (GQTSGFGQHRPGSGQSSGFGQYGSGSGQSSGFGQHGSGTGKSSGF) is one Filaggrin 4 repeat. Residues 1111–1137 (QSSGFGQYGSGSGQSSGFGQHGSGTGK) are compositionally biased toward gly residues. Over residues 1148–1174 (SGQSSYGQHGTGSSQSSGCGQHESGSG) the composition is skewed to low complexity. Positions 1175–1198 (PTTSFGQHVSGSDNFSSSGQHISD) are enriched in polar residues. Residues 1206 to 1220 (GQYGSGSGQSTGLGQ) are compositionally biased toward gly residues. Over residues 1226–1249 (VESGSTVHGRQETTHGQTINTTRH) the composition is skewed to polar residues. The segment covering 1250 to 1263 (SQSGQGQSTQTGSR) has biased composition (low complexity). Ser1276 is subject to Phosphoserine. Residues 1329–1343 (HGQSTQTGSRTSGRQ) show a composition bias toward polar residues. Over residues 1346-1355 (SHSDATDSEV) the composition is skewed to basic and acidic residues. Positions 1366–1377 (QEQTHSQAGSQH) are enriched in polar residues. Positions 1378–1390 (GESESTVHERHET) are enriched in basic and acidic residues. A compositionally biased stretch (low complexity) spans 1406–1416 (HGQSTQRGSRT). Residues Ser1427 and Ser1428 each carry the phosphoserine modification. Polar residues predominate over residues 1439–1459 (RPQSQEQTHGQAGSQHGESGS). A Filaggrin 5 repeat occupies 1455–1510 (GESGSTVHGRHGTTHGQTGDTTRHAHYHHGKSTQRGSSTTGRRGSGHSESSDSEVH). Residues 1487–1496 (TQRGSSTTGR) are compositionally biased toward low complexity. Ser1504 and Ser1505 each carry phosphoserine. A compositionally biased stretch (low complexity) spans 1510–1529 (HSGGSHTHSGHTHGQSGSQH). Positions 1544–1559 (HGQTGDTTRHSYSGHE) are enriched in polar residues. The segment covering 1560–1572 (QTTQTGSRTTGRQ) has biased composition (low complexity). Composition is skewed to basic and acidic residues over residues 1575–1584 (SHSESTDSEV) and 1605–1618 (QHEEPEFTVHERHG). At Ser1579 the chain carries Phosphoserine. One copy of the Filaggrin 6 repeat lies at 1607-1662 (EEPEFTVHERHGTTHGQIGDTTGHSHSGHGQSTQRGSRTTGRQRSSHSESSDSEVH). A compositionally biased stretch (low complexity) spans 1627–1649 (TTGHSHSGHGQSTQRGSRTTGRQ). Residues 1652-1661 (SHSESSDSEV) are compositionally biased toward basic and acidic residues. Phosphoserine occurs at positions 1656 and 1657. Composition is skewed to low complexity over residues 1662–1686 (HSGVSHTHTGHTHGQAGSQHGQSES) and 1711–1720 (GLTTQTGSRT). Residues 1755 to 1768 (QHGESESIVHERHG) show a composition bias toward basic and acidic residues. The Filaggrin 7 repeat unit spans residues 1757 to 1812 (GESESIVHERHGTIHGQTGDTTRHAHSGHGQSTQTGSRTTGRRSSGHSEYSDSEGH). Residues 1784–1795 (GHGQSTQTGSRT) are compositionally biased toward low complexity. Phosphoserine occurs at positions 1800 and 1807. Basic and acidic residues predominate over residues 1834–1845 (GESESIVDERHG). The span at 1849–1873 (GQTGDTSGHSQSGHGQSTQSGSSTT) shows a compositional bias: low complexity. A compositionally biased stretch (basic and acidic residues) spans 1879 to 1888 (GHSESSDSEV). Phosphoserine is present on residues Ser1883, Ser1884, and Ser1959. Filaggrin repeat units follow at residues 1928–1964 (DTTEHGHPSHGQTIQTGSRTTGRRGSGHSEYSDSEGP) and 1984–2039 (PESG…SEGH). Composition is skewed to low complexity over residues 1963 to 1982 (GPSGVSHTHSGHTHGQAGSH) and 2013 to 2022 (GQSTQRGSRT). Ser2034 is modified (phosphoserine). Composition is skewed to low complexity over residues 2039 to 2059 (HSGVSHTHSGHAHGQAGSQHG), 2114 to 2125 (HSGVSHTHSGHT), and 2162 to 2176 (HGQSTQTGSRTTGRQ). The Filaggrin 10 repeat unit spans residues 2134-2189 (GESGSAIHGRQGTIHGQTGDTTRHGQSGHGQSTQTGSRTTGRQRSSHSESSDSEVH). Basic and acidic residues predominate over residues 2179 to 2190 (SHSESSDSEVHS). Low complexity-rich tracts occupy residues 2201–2211 (HSQAGSRHGQS), 2219–2228 (QGTTHGQTGD), and 2238–2247 (GQSTQRGSRT). The span at 2273–2288 (GHIQGQAGSQQRQPGS) shows a compositional bias: polar residues. Low complexity predominate over residues 2320–2331 (SRSSRASHFQSH). Residues 2367 to 2391 (SRKSISNSHLSWSTDSTANKQLSRH) show a composition bias toward polar residues.

The protein belongs to the S100-fused protein family. This sequence in the N-terminal section; belongs to the S-100 family. Deiminated by PADI1, PADI2 or PADI3 in vitro. The deiminated form is degraded by calpain-1/CAPN1 more quickly and into shorter peptides than the intact protein. Post-translationally, may be processed by calpain-1/CAPN1 in the uppermost epidermal layers. In terms of tissue distribution, expressed in skin, thymus, stomach and placenta, but not detected in heart, brain, liver, lung, bone marrow, small intestine, spleen, prostate, colon, adrenal gland, kidney, pancreas, mammary gland, bladder, thyroid, salivary gland and trachea. Weakly expressed in esophagus, tonsils and testis (at protein level). In the skin, strongly expressed in the upper stratum granulosum and lower stratum corneum, but not detected in the upper stratum corneum (at protein level). In scalp hair follicles, mainly restricted within the granular and cornified cells surrounding the infundibular outer root sheath, with weak expression in central and proximal outer root sheath (at protein level). Tends to be down-regulated in sporiatic lesions compared to non-lesional skin inthe same patients.

It localises to the cytoplasm. The protein localises to the cytoplasmic granule. Its function is as follows. Essential for normal cell-cell adhesion in the cornified cell layers. Important for proper integrity and mechanical strength of the stratum corneum of the epidermis. The polypeptide is Filaggrin-2 (FLG2) (Homo sapiens (Human)).